Reading from the N-terminus, the 158-residue chain is Leptin-B (158 aa).

A signal peptide spans 1 to 19; sequence MYMPLALVYASFLTLPAST. Cysteine 114 and cysteine 158 are oxidised to a cystine.

The protein belongs to the leptin family. In terms of tissue distribution, highly expressed in the brain and eye. Expressed at low levels in muscle and skin.

It localises to the secreted. Functionally, may function as part of a signaling pathway that acts to regulate the size of the body fat depot. The protein is Leptin-B of Oryzias latipes (Japanese rice fish).